Consider the following 290-residue polypeptide: Translin-associated protein X (290 aa).

Residues 1-32 (MSNKEGSGGFRKRKHDNFPHNQRREGKDVNSS) form a disordered region. Positions 16–28 (DNFPHNQRREGKD) are enriched in basic and acidic residues. Residues 73–208 (LLHRITSAPD…MRMCINSVGN (136 aa)) are interaction with C1D. Residues E129 and E197 each coordinate Mg(2+). Residue K279 forms a Glycyl lysine isopeptide (Lys-Gly) (interchain with G-Cter in SUMO2) linkage.

This sequence belongs to the translin family. As to quaternary structure, ring-shaped heterooctamer of six TSN and two TSNAX subunits. Interacts with GOLGA3, TSNAXIP1, SUN1 and AKAP9. Interacts with the homodimeric form of C1D following gamma-radiation. Interacts with TSN and C1D in a mutually exclusive manner. Sumoylated with SUMO1.

The protein resides in the cytoplasm. Its subcellular location is the perinuclear region. It localises to the golgi apparatus. The protein localises to the nucleus. In terms of biological role, acts in combination with TSN as an endonuclease involved in the activation of the RNA-induced silencing complex (RISC). Possible role in spermatogenesis. The protein is Translin-associated protein X (TSNAX) of Pongo abelii (Sumatran orangutan).